The following is a 581-amino-acid chain: Pyridine nucleotide-disulfide oxidoreductase domain-containing protein 2 (581 aa).

38–71 (VVIGAGHNGLVAAAYLQRLGVNTAVFERRHVIGG) lines the FAD pocket.

It belongs to the carotenoid/retinoid oxidoreductase family. Interacts with COX5B; this interaction may contribute to localize PYROXD2 to the inner face of the inner mitochondrial membrane.

It is found in the mitochondrion matrix. Its function is as follows. Probable oxidoreductase that may play a role as regulator of mitochondrial function. This chain is Pyridine nucleotide-disulfide oxidoreductase domain-containing protein 2, found in Mus musculus (Mouse).